A 295-amino-acid chain; its full sequence is Protoheme IX farnesyltransferase 2 (295 aa).

9 helical membrane-spanning segments follow: residues 9–29 (ITKP…FFLA), 36–56 (LAIF…GCVF), 85–105 (VALV…YYVA), 108–128 (LAAL…SLYL), 135–155 (GTLV…VAVS), 163–183 (LTLL…IAIF), 209–229 (ILLY…SGYA), 230–250 (GMSY…MAWT), and 263–283 (KLFV…SVDF).

This sequence belongs to the UbiA prenyltransferase family. Protoheme IX farnesyltransferase subfamily.

It localises to the cell inner membrane. The catalysed reaction is heme b + (2E,6E)-farnesyl diphosphate + H2O = Fe(II)-heme o + diphosphate. The protein operates within porphyrin-containing compound metabolism; heme O biosynthesis; heme O from protoheme: step 1/1. In terms of biological role, converts heme B (protoheme IX) to heme O by substitution of the vinyl group on carbon 2 of heme B porphyrin ring with a hydroxyethyl farnesyl side group. The polypeptide is Protoheme IX farnesyltransferase 2 (Pseudomonas fluorescens (strain ATCC BAA-477 / NRRL B-23932 / Pf-5)).